The chain runs to 396 residues: Mevalonate kinase (396 aa).

ATP contacts are provided by residues Lys-13, Asn-55, Ser-135, and 140–146; that span reads GAGLGSS. Ser-146 functions as the Proton donor in the catalytic mechanism. Mg(2+) contacts are provided by Ser-146 and Glu-193. Asp-204 acts as the Proton acceptor in catalysis.

It belongs to the GHMP kinase family. Mevalonate kinase subfamily. Homodimer. Mg(2+) is required as a cofactor.

It is found in the cytoplasm. It localises to the peroxisome. It carries out the reaction (R)-mevalonate + ATP = (R)-5-phosphomevalonate + ADP + H(+). The protein operates within isoprenoid biosynthesis; isopentenyl diphosphate biosynthesis via mevalonate pathway; isopentenyl diphosphate from (R)-mevalonate: step 1/3. Farnesyl pyrophosphate and geranyl pyrophosphate inhibit mevalonate kinase activity by binding competitively at the ATP-binding sites. Its function is as follows. Catalyzes the phosphorylation of mevalonate to mevalonate 5-phosphate, a key step in isoprenoid and cholesterol biosynthesis. The chain is Mevalonate kinase from Bos taurus (Bovine).